The primary structure comprises 540 residues: Anti-sigma-I factor RsgI7 (540 aa).

The RsgI N-terminal anti-sigma domain maps to 1–48 (MRAMVVDMNDKYAVVVNKEGQYIKIKRKAEHRLGYQVELPDRVIGFER). Topologically, residues 1–50 (MRAMVVDMNDKYAVVVNKEGQYIKIKRKAEHRLGYQVELPDRVIGFERRT) are cytoplasmic. The chain crosses the membrane as a helical span at residues 51–73 (LLKVVSVAAALLIVSSISFAVYS). At 74-540 (YNLPYSYVNV…PGKEILKKRC (467 aa)) the chain is on the extracellular side. Basic and acidic residues-rich tracts occupy residues 238–256 (DIKK…KKVN), 319–329 (SGIDKGNKDSK), 338–351 (NDVK…KTNS), 359–370 (VSKDNKNDKADG), and 398–419 (SKDD…EDNK). Disordered stretches follow at residues 238-429 (DIKK…CPQY) and 481-540 (QEEQ…KKRC). Residues 451 to 501 (KEDMTKQNDEWFKKMQEEQKKQYDEWLKKMQEEQKKQHDEWVKKMEEMKNT) adopt a coiled-coil conformation.

In terms of assembly, interacts (via RsgI N-terminal anti-sigma domain) with SigI7.

It localises to the cell membrane. Anti-sigma factor for SigI7. Negatively regulates SigI7 activity through direct interaction. The chain is Anti-sigma-I factor RsgI7 from Acetivibrio thermocellus (strain ATCC 27405 / DSM 1237 / JCM 9322 / NBRC 103400 / NCIMB 10682 / NRRL B-4536 / VPI 7372) (Clostridium thermocellum).